The primary structure comprises 688 residues: PHD finger protein 21A (688 aa).

Lysine 65 participates in a covalent cross-link: Glycyl lysine isopeptide (Lys-Gly) (interchain with G-Cter in SUMO2). Disordered stretches follow at residues 78 to 127 (SQSE…LTAS) and 327 to 373 (PQTV…ENPQ). Residues 85 to 127 (QTAQQQPLQPLQQQQPQQPQQQQQQQQQHAQQSAAAPPSLTAS) are compositionally biased toward low complexity. Residues 336 to 354 (SLEKQTVKSHPEAEEKQAE) are compositionally biased toward basic and acidic residues. Positions 434–446 (TRKRGRPPKYNAV) form a DNA-binding region, a.T hook. The interval 449 to 471 (FGALTPTSPPSSHPDSPENEKTE) is disordered. Threonine 453 is modified (phosphothreonine). At serine 456 the chain carries Phosphoserine. The PHD-type zinc-finger motif lies at 497–544 (EDFCSVCRKSGQLLMCDTCSRVYHLDCLEPPLKTIPKGMWICPRCQDQ). The stretch at 571 to 609 (KEEEKQKLLKWSSDLKQEREQLEQKVKELSSSISKCMEM) forms a coiled coil. Residues 650-688 (GALSNGPDCTPPANAASTPAPSPSSQSCTANCNQGEETK) are disordered. Positions 660-679 (PPANAASTPAPSPSSQSCTA) are enriched in low complexity.

As to quaternary structure, component of a BHC histone deacetylase complex that contains HDAC1, HDAC2, HMG20B/BRAF35, KDM1A, RCOR1/CoREST and PHF21A/BHC80. The BHC complex may also contain ZMYM2, ZNF217, ZMYM3, GSE1 and GTF2I. In the complex, it interacts directly with HDAC1, HDAC2, HMG20B/BRAF35, KDM1A and RCOR1/CoREST. In terms of tissue distribution, expressed in the brain and testis. Weakly or not expressed in other tissues tested. Localized throughout the central nervous system (CNS) in brain, including the cerebellum, hippocampus, and cortex. Notably present in neuronal cells of granular cell layer and dentate gyrus in cerebellum and hippocampus, respectively. In the seminiferous tubules, the signals it is present strongly in spermatocytes, and weakly in spermatogonia and round spermatids. In some cases, it is also observed solely in spermatocytes (at protein level).

The protein resides in the nucleus. Functionally, component of the BHC complex, a corepressor complex that represses transcription of neuron-specific genes in non-neuronal cells. The BHC complex is recruited at RE1/NRSE sites by REST and acts by deacetylating and demethylating specific sites on histones, thereby acting as a chromatin modifier. In the BHC complex, it may act as a scaffold. Inhibits KDM1A-mediated demethylation of 'Lys-4' of histone H3 in vitro, suggesting a role in demethylation regulation. This is PHD finger protein 21A from Mus musculus (Mouse).